Consider the following 338-residue polypeptide: Ketol-acid reductoisomerase (NADP(+)) (338 aa).

The 181-residue stretch at 1 to 181 (MKVYYDKDAD…GGGKAGIIET (181 aa)) folds into the KARI N-terminal Rossmann domain. NADP(+) contacts are provided by residues 24–27 (YGSQ), arginine 47, and serine 52. Histidine 107 is a catalytic residue. Glycine 133 serves as a coordination point for NADP(+). One can recognise a KARI C-terminal knotted domain in the interval 182 to 327 (NFREETETDL…EKLRAMMPWI (146 aa)). The Mg(2+) site is built by aspartate 190, glutamate 194, glutamate 226, and glutamate 230. A substrate-binding site is contributed by serine 251.

This sequence belongs to the ketol-acid reductoisomerase family. Requires Mg(2+) as cofactor.

The catalysed reaction is (2R)-2,3-dihydroxy-3-methylbutanoate + NADP(+) = (2S)-2-acetolactate + NADPH + H(+). The enzyme catalyses (2R,3R)-2,3-dihydroxy-3-methylpentanoate + NADP(+) = (S)-2-ethyl-2-hydroxy-3-oxobutanoate + NADPH + H(+). It participates in amino-acid biosynthesis; L-isoleucine biosynthesis; L-isoleucine from 2-oxobutanoate: step 2/4. The protein operates within amino-acid biosynthesis; L-valine biosynthesis; L-valine from pyruvate: step 2/4. Its function is as follows. Involved in the biosynthesis of branched-chain amino acids (BCAA). Catalyzes an alkyl-migration followed by a ketol-acid reduction of (S)-2-acetolactate (S2AL) to yield (R)-2,3-dihydroxy-isovalerate. In the isomerase reaction, S2AL is rearranged via a Mg-dependent methyl migration to produce 3-hydroxy-3-methyl-2-ketobutyrate (HMKB). In the reductase reaction, this 2-ketoacid undergoes a metal-dependent reduction by NADPH to yield (R)-2,3-dihydroxy-isovalerate. The polypeptide is Ketol-acid reductoisomerase (NADP(+)) (Variovorax paradoxus (strain S110)).